The sequence spans 482 residues: NAD(+) hydrolase ThsA (482 aa).

One can recognise a Deacetylase sirtuin-type domain in the interval 3–281; that stretch reads EHEQKIMIDR…EEITKRFRCK (279 aa). Aspartate 112 and histidine 150 together coordinate NAD(+). The Proton acceptor role is filled by histidine 150. Positions 282-482 are SLOG (STALD) domain; sequence NVFLSGSAHE…SKIHDVIKLI (201 aa). 3'cADPR-binding residues include glycine 287, serine 288, leucine 324, phenylalanine 355, arginine 373, lysine 390, glycine 407, and glutamate 411.

It belongs to the soluble Thoeris ThsA family. Homotetramer in solution.

The enzyme catalyses NAD(+) + H2O = ADP-D-ribose + nicotinamide + H(+). In vivo probably activated by a cyclic ADP-D-ribose generated by ThsB (might be 3'cADPR). Its function is as follows. NAD(+) hydrolyzing component (NADase) of the Thoeris antiviral defense system, composed of ThsA and ThsB (maybe J591_1492). As purified, has NADase activity that is not activated by any tested cADPR isomers; binds 3'cADPR better than 2'cADPR. It was suggested the purified protein is already in a fully active state. Upon activation binds and hydrolyzes NAD(+), leading to cell death and inhibition of phage replication. The polypeptide is NAD(+) hydrolase ThsA (Acinetobacter baumannii (strain 532279)).